Consider the following 469-residue polypeptide: Transcription factor SOX-10 (469 aa).

Disordered stretches follow at residues Met-1–Lys-70, Leu-163–Ala-203, Leu-215–Asn-278, Ala-357–Thr-378, and Arg-436–Pro-469. The span at Leu-23–Gly-32 shows a compositional bias: low complexity. Phosphoserine is present on Ser-24. A compositionally biased stretch (gly residues) spans Pro-33–Gly-44. The segment at Glu-65–Pro-105 is dimerization (DIM). A DNA-binding region (HMG box) is located at residues Val-107 to Lys-175. Composition is skewed to basic and acidic residues over residues Leu-163 to Tyr-176 and Ala-257 to Ile-274. The transactivation domain (TAM) stretch occupies residues Pro-231 to Val-313. Residues Lys-356–Pro-469 are transactivation domain (TAC). Over residues Ser-443–Pro-469 the composition is skewed to polar residues.

Monomer. Interacts with ARMCX3 at the mitochondrial outer membrane surface. Interacts with PAX3.

It is found in the cytoplasm. The protein resides in the nucleus. The protein localises to the mitochondrion outer membrane. In terms of biological role, transcription factor that plays a central role in developing and mature glia. Specifically activates expression of myelin genes, during oligodendrocyte (OL) maturation, such as DUSP15 and MYRF, thereby playing a central role in oligodendrocyte maturation and CNS myelination. Once induced, MYRF cooperates with SOX10 to implement the myelination program. Transcriptional activator of MITF, acting synergistically with PAX3. Transcriptional activator of MBP, via binding to the gene promoter. The sequence is that of Transcription factor SOX-10 (SOX10) from Sus scrofa (Pig).